A 201-amino-acid polypeptide reads, in one-letter code: Small ribosomal subunit protein uS4 (201 aa).

The region spanning 91–151 (ARLDNVIYRA…DRSRSMLWFD (61 aa)) is the S4 RNA-binding domain.

The protein belongs to the universal ribosomal protein uS4 family. As to quaternary structure, part of the 30S ribosomal subunit. Contacts protein S5. The interaction surface between S4 and S5 is involved in control of translational fidelity.

In terms of biological role, one of the primary rRNA binding proteins, it binds directly to 16S rRNA where it nucleates assembly of the body of the 30S subunit. Its function is as follows. With S5 and S12 plays an important role in translational accuracy. The chain is Small ribosomal subunit protein uS4 from Corynebacterium urealyticum (strain ATCC 43042 / DSM 7109).